We begin with the raw amino-acid sequence, 619 residues long: Dihydroxy-acid dehydratase 1 (619 aa).

Aspartate 81 serves as a coordination point for Mg(2+). Residue cysteine 122 participates in [2Fe-2S] cluster binding. Mg(2+)-binding residues include aspartate 123 and lysine 124. An N6-carboxylysine modification is found at lysine 124. Residue cysteine 201 participates in [2Fe-2S] cluster binding. Mg(2+) is bound at residue glutamate 496. The active-site Proton acceptor is the serine 522.

Belongs to the IlvD/Edd family. As to quaternary structure, homodimer. Requires [2Fe-2S] cluster as cofactor. Mg(2+) is required as a cofactor.

It catalyses the reaction (2R)-2,3-dihydroxy-3-methylbutanoate = 3-methyl-2-oxobutanoate + H2O. The catalysed reaction is (2R,3R)-2,3-dihydroxy-3-methylpentanoate = (S)-3-methyl-2-oxopentanoate + H2O. Its pathway is amino-acid biosynthesis; L-isoleucine biosynthesis; L-isoleucine from 2-oxobutanoate: step 3/4. It participates in amino-acid biosynthesis; L-valine biosynthesis; L-valine from pyruvate: step 3/4. Functions in the biosynthesis of branched-chain amino acids. Catalyzes the dehydration of (2R,3R)-2,3-dihydroxy-3-methylpentanoate (2,3-dihydroxy-3-methylvalerate) into 2-oxo-3-methylpentanoate (2-oxo-3-methylvalerate) and of (2R)-2,3-dihydroxy-3-methylbutanoate (2,3-dihydroxyisovalerate) into 2-oxo-3-methylbutanoate (2-oxoisovalerate), the penultimate precursor to L-isoleucine and L-valine, respectively. This chain is Dihydroxy-acid dehydratase 1, found in Burkholderia lata (strain ATCC 17760 / DSM 23089 / LMG 22485 / NCIMB 9086 / R18194 / 383).